Reading from the N-terminus, the 114-residue chain is Large ribosomal subunit protein bL20c (114 aa).

The protein belongs to the bacterial ribosomal protein bL20 family.

It is found in the plastid. Its subcellular location is the chloroplast. In terms of biological role, binds directly to 23S ribosomal RNA and is necessary for the in vitro assembly process of the 50S ribosomal subunit. It is not involved in the protein synthesizing functions of that subunit. The protein is Large ribosomal subunit protein bL20c of Tetradesmus obliquus (Green alga).